Consider the following 168-residue polypeptide: Profilin-3 (168 aa).

The disordered stretch occupies residues 14–36; that stretch reads LSLEHSDKPQRRSRAKVKKKKKT. Positions 24–36 are enriched in basic residues; that stretch reads RRSRAKVKKKKKT.

The protein belongs to the profilin family. Occurs in many kinds of cells as a complex with monomeric actin in a 1:1 ratio. Binding to the poly-proline motif of formins induces formation of oligomers through the N-terminal hydrophobic residues of PRF3. Expressed in roots, rosette leaves, cauline leaves, stems and flowers.

Its subcellular location is the cytoplasm. It localises to the cytoskeleton. Its function is as follows. Binds to actin monomers and regulates the organization of the actin cytoskeleton. Can increase the critical concentration (Cc) of actin assembly in vitro. Acts as a downstream effector of the hydrogen sulfide signaling to regulate the assembly and depolymerization of F-actin. At high concentrations, profilin prevents the polymerization of actin, whereas it enhances it at low concentrations. Binding to the poly-proline motif of formin induces oligomerization of PRF3. PRF3 oligomers inhibit formin-mediated actin assembly to modulate plant immunity triggered by pathogen-associated molecular patterns (PAMPs). The polypeptide is Profilin-3 (Arabidopsis thaliana (Mouse-ear cress)).